The sequence spans 298 residues: HTH-type transcriptional regulator CzcR (298 aa).

Residues 11 to 68 (MELRDLQIFQSVADQGSVSSAAKELNYVQSNVTARIKQLENELKTPLFYRHKRGMTLT) form the HTH lysR-type domain. The H-T-H motif DNA-binding region spans 28–47 (VSSAAKELNYVQSNVTARIK).

The protein belongs to the LysR transcriptional regulatory family.

This chain is HTH-type transcriptional regulator CzcR (czcR), found in Bacillus thuringiensis (strain Al Hakam).